The chain runs to 373 residues: CXADR-like membrane protein (373 aa).

Positions 1-17 (MSLFFLWLVSYYVGTLG) are cleaved as a signal peptide. Ig-like C2-type domains are found at residues 18–126 (THTE…VILK) and 134–223 (PKCE…VRVT). The Extracellular portion of the chain corresponds to 18–234 (THTEIKRVAE…QYVQSIGMVA (217 aa)). Disulfide bonds link Cys34–Cys110 and Cys152–Cys207. N-linked (GlcNAc...) asparagine glycosylation is found at Asn73 and Asn196. Residues 235-255 (GAVTGIVAGALLIFLLIWLLI) form a helical membrane-spanning segment. The Cytoplasmic segment spans residues 256-373 (RRKSKDRYEE…PSQSKAFQTV (118 aa)). Residues 263–280 (YEEEDRPNEIREDAEAPR) are compositionally biased toward basic and acidic residues. Residues 263-373 (YEEEDRPNEI…PSQSKAFQTV (111 aa)) are disordered. Low complexity-rich tracts occupy residues 287–313 (SSSS…ASRS), 321–332 (AAPQQPGLAPQA), and 353–363 (LTKAETTLSTT). Residues 364 to 373 (PSQSKAFQTV) are compositionally biased toward polar residues.

In terms of tissue distribution, predominantly expressed in epithelial cells within different tissues and in the white adipose tissue. Expressed at high levels in the heart and brain, at intermediate levels in the lung, skeletal muscle, kidney and testis and at low levels in the liver and spleen.

The protein localises to the cell junction. It is found in the tight junction. The protein resides in the cell membrane. Functionally, may be involved in the cell-cell adhesion. May play a role in adipocyte differentiation and development of obesity. Is required for normal small intestine development. The chain is CXADR-like membrane protein (Clmp) from Mus musculus (Mouse).